Consider the following 1460-residue polypeptide: ABC transporter C family member 5 (1460 aa).

Disordered regions lie at residues 1-23 (MKYN…NESE) and 37-68 (GNNN…KKKN). Low complexity predominate over residues 37–55 (GNNNNDINNNNNINNNNDS). Helical transmembrane passes span 196–216 (FALS…GPIF), 238–258 (LGYY…IFLY), 320–340 (LIFA…CVGW), 425–445 (LIVV…TVYY), and 456–476 (IFAA…LPYG). One can recognise an ABC transmembrane type-1 1 domain in the interval 196 to 482 (FALSWVHFGL…LPYGYNIYIQ (287 aa)). A disordered region spans residues 537–567 (IKPQTNPPPPRTTPSNDKSSPSGNNSNNEKK). Residues 551 to 563 (SNDKSSPSGNNSN) show a composition bias toward polar residues. The ABC transporter 1 domain occupies 560–783 (NNSNNEKKEV…INSAYGNSSL (224 aa)). Residue 593–600 (GPVGSGKS) participates in ATP binding. A run of 4 helical transmembrane segments spans residues 842-862 (MYYV…GYCI), 922-942 (AGEF…LIIV), 1014-1034 (ILVI…PIII), and 1108-1128 (WLGL…CIFI). The region spanning 853–1166 (FLIALLGYCI…ATQQLAELET (314 aa)) is the ABC transmembrane type-1 2 domain. The 235-residue stretch at 1210-1444 (IIFENVVMSY…ENSLFNWLID (235 aa)) folds into the ABC transporter 2 domain. An ATP-binding site is contributed by 1244-1251 (GRTGSGKS).

This sequence belongs to the ABC transporter superfamily. ABCC family. Conjugate transporter (TC 3.A.1.208) subfamily.

It is found in the membrane. This is ABC transporter C family member 5 (abcC5) from Dictyostelium discoideum (Social amoeba).